Here is a 563-residue protein sequence, read N- to C-terminus: Pyruvate decarboxylase isozyme 3 (563 aa).

An N-acetylserine modification is found at S2. Positions 28 and 115 each coordinate pyruvate. K212 is covalently cross-linked (Glycyl lysine isopeptide (Lys-Gly) (interchain with G-Cter in ubiquitin)). Position 223 is a phosphoserine (S223). Residue K233 forms a Glycyl lysine isopeptide (Lys-Gly) (interchain with G-Cter in ubiquitin) linkage. T266 bears the Phosphothreonine mark. A Glycyl lysine isopeptide (Lys-Gly) (interchain with G-Cter in ubiquitin) cross-link involves residue K269. T353 is subject to Phosphothreonine. Thiamine diphosphate is bound by residues T390 and 413–415 (GSI). Residue D444 coordinates Mg(2+). Thiamine diphosphate is bound by residues 445–446 (GS) and 471–476 (NDGYTI). Positions 471 and 473 each coordinate Mg(2+). Residue E477 coordinates pyruvate. A Glycyl lysine isopeptide (Lys-Gly) (interchain with G-Cter in ubiquitin) cross-link involves residue K505. Position 522 is a phosphothreonine (T522).

The protein belongs to the TPP enzyme family. Homotetramer. Mg(2+) is required as a cofactor. It depends on thiamine diphosphate as a cofactor.

The protein resides in the cytoplasm. The catalysed reaction is pyruvate + H(+) = acetaldehyde + CO2. It catalyses the reaction 3-methyl-2-oxobutanoate + H(+) = 2-methylpropanal + CO2. It carries out the reaction (S)-3-methyl-2-oxopentanoate + H(+) = 2-methylbutanal + CO2. The enzyme catalyses indole-3-pyruvate + H(+) = indole-3-acetaldehyde + CO2. The catalysed reaction is 3-phenylpyruvate + H(+) = 2-phenylacetaldehyde + CO2. It catalyses the reaction 2-oxobutanoate + H(+) = propanal + CO2. It carries out the reaction 2-oxopentanoate + H(+) = butanal + CO2. The enzyme catalyses 2 acetaldehyde = acetoin. The catalysed reaction is acetaldehyde + pyruvate + H(+) = acetoin + CO2. It participates in fermentation; ethanol fermentation. Its pathway is amino-acid degradation; Ehrlich pathway. Functionally, minor of three pyruvate decarboxylases (PDC1, PDC5, PDC6) implicated in the nonoxidative conversion of pyruvate to acetaldehyde and carbon dioxide during alcoholic fermentation. Most of the produced acetaldehyde is subsequently reduced to ethanol, but some is required for cytosolic acetyl-CoA production for biosynthetic pathways. The enzyme is also one of five 2-oxo acid decarboxylases (PDC1, PDC5, PDC6, ARO10, and THI3) able to decarboxylate more complex 2-oxo acids (alpha-keto-acids) than pyruvate, which seem mainly involved in amino acid catabolism. Here the enzyme catalyzes the decarboxylation of amino acids, which, in a first step, have been transaminated to the corresponding 2-oxo acids. In a third step, the resulting aldehydes are reduced to alcohols, collectively referred to as fusel oils or alcohols. Its preferred substrates are the transaminated amino acids derived from threonine (2-oxobutanoate), norvaline (2-oxopentanoate), valine (3-methyl-2-oxobutanoate, also alpha-keto-isovalerate), isoleucine ((3S)-3-methyl-2-oxopentanoate, also alpha-keto-beta-methylvalerate), phenylalanine (phenylpyruvate), and tryptophan (3-(indol-3-yl)pyruvate), whereas transaminated leucine is no substrate. In a side-reaction the carbanionic intermediate (or active aldehyde) generated by decarboxylation or by activation of an aldehyde can react with an aldehyde via condensation (or carboligation) yielding a 2-hydroxy ketone, collectively called acyloins. The expression level of this protein in the presence of fermentable carbon sources is so low that it cannot compensate for the other two pyruvate decarboxylases to sustain fermentation. This Saccharomyces cerevisiae (strain ATCC 204508 / S288c) (Baker's yeast) protein is Pyruvate decarboxylase isozyme 3 (PDC6).